The sequence spans 416 residues: Thyroid hormone receptor alpha-A (416 aa).

The span at 1–13 (MEPMSNKQDSNSS) shows a compositional bias: polar residues. Positions 1-37 (MEPMSNKQDSNSSEGDEKGWPDVPKRKRKNSQCSMKS) are disordered. Residues 1 to 58 (MEPMSNKQDSNSSEGDEKGWPDVPKRKRKNSQCSMKSMSALSVSVPGYIPSYLEKDEP) are modulating. Positions 15–24 (GDEKGWPDVP) are enriched in basic and acidic residues. 2 consecutive NR C4-type zinc fingers follow at residues 59-79 (CVVC…CEGC) and 97-121 (CKYE…FKKC). The nuclear receptor DNA-binding region spans 59-126 (CVVCGDKATG…RFKKCISVGM (68 aa)). Positions 169-413 (AEWELIRMAT…PPLFLEVFED (245 aa)) constitute an NR LBD domain.

The protein belongs to the nuclear hormone receptor family. NR1 subfamily.

The protein resides in the nucleus. Functionally, high affinity receptor for triiodothyronine. In Paralichthys olivaceus (Bastard halibut), this protein is Thyroid hormone receptor alpha-A (thra1).